Here is a 393-residue protein sequence, read N- to C-terminus: Methylthioribose kinase (393 aa).

Residues asparagine 38, lysine 53, and 107–109 (EDL) each bind ATP. Position 225 (aspartate 225) interacts with substrate. An ATP-binding site is contributed by 242-244 (DPE). Substrate is bound at residue arginine 332.

Belongs to the methylthioribose kinase family. In terms of assembly, homodimer.

The enzyme catalyses 5-(methylsulfanyl)-D-ribose + ATP = 5-(methylsulfanyl)-alpha-D-ribose 1-phosphate + ADP + H(+). It functions in the pathway amino-acid biosynthesis; L-methionine biosynthesis via salvage pathway; S-methyl-5-thio-alpha-D-ribose 1-phosphate from S-methyl-5'-thioadenosine (hydrolase route): step 2/2. Functionally, catalyzes the phosphorylation of methylthioribose into methylthioribose-1-phosphate. The protein is Methylthioribose kinase of Bacillus cereus (strain AH820).